Here is an 886-residue protein sequence, read N- to C-terminus: Phosphatidylinositol 3-kinase catalytic subunit type 3 (886 aa).

Positions 35–184 (YKAVLEDPML…LAKLTKAHRQ (150 aa)) constitute a C2 PI3K-type domain. Residues 283 to 519 (DHDLKPNAAT…PKTHEMYLNV (237 aa)) form the PIK helical domain. The tract at residues 414-464 (GLEPTKKDSQGPMLESMTTSGINPETDSSQILSNPLPAVSSPAPPSKTKDG) is disordered. Positions 429-444 (SMTTSGINPETDSSQI) are enriched in polar residues. Positions 445–454 (LSNPLPAVSS) are enriched in low complexity. The PI3K/PI4K catalytic domain occupies 604–870 (IPEKATLFKS…LIDDSVNALF (267 aa)). Positions 610–616 (LFKSALM) are G-loop. Residues 739–747 (GVGDRHLDN) are catalytic loop. Positions 758-779 (HIDFGYILGRDPKPLPPPMKLN) are activation loop.

The protein belongs to the PI3/PI4-kinase family. In terms of assembly, component of the PI3K (PI3KC3/PI3K-III/class III phosphatidylinositol 3-kinase) complex the core of which is composed of the catalytic subunit pik3c3, the regulatory subunit pik3r4 and becn1 associating with additional regulatory/auxiliary subunits to form alternative complex forms. Requires Mn(2+) as cofactor.

It is found in the midbody. The enzyme catalyses a 1,2-diacyl-sn-glycero-3-phospho-(1D-myo-inositol) + ATP = a 1,2-diacyl-sn-glycero-3-phospho-(1D-myo-inositol-3-phosphate) + ADP + H(+). Its function is as follows. Catalytic subunit of the PI3K complex that mediates formation of phosphatidylinositol 3-phosphate; different complex forms are believed to play a role in multiple membrane trafficking pathways. Involved in the transport of lysosomal enzyme precursors to lysosomes. Required for transport from early to late endosomes. This chain is Phosphatidylinositol 3-kinase catalytic subunit type 3 (pik3c3), found in Xenopus laevis (African clawed frog).